A 278-amino-acid chain; its full sequence is Digeranylgeranylglyceryl phosphate synthase (278 aa).

The next 8 membrane-spanning stretches (helical) occupy residues 12 to 32 (LKNC…ASYF), 34 to 54 (LAMV…CGFG), 92 to 112 (LVVM…MAVL), 129 to 149 (IIGN…GGIA), 153 to 173 (IDVT…REII), 204 to 224 (FLLI…FFGI), 226 to 246 (YMIS…KLVF), and 257 to 277 (SRNI…GSLF).

The protein belongs to the UbiA prenyltransferase family. DGGGP synthase subfamily. Mg(2+) serves as cofactor.

The protein localises to the cell membrane. It catalyses the reaction sn-3-O-(geranylgeranyl)glycerol 1-phosphate + (2E,6E,10E)-geranylgeranyl diphosphate = 2,3-bis-O-(geranylgeranyl)-sn-glycerol 1-phosphate + diphosphate. It functions in the pathway membrane lipid metabolism; glycerophospholipid metabolism. In terms of biological role, prenyltransferase that catalyzes the transfer of the geranylgeranyl moiety of geranylgeranyl diphosphate (GGPP) to the C2 hydroxyl of (S)-3-O-geranylgeranylglyceryl phosphate (GGGP). This reaction is the second ether-bond-formation step in the biosynthesis of archaeal membrane lipids. The protein is Digeranylgeranylglyceryl phosphate synthase of Methanococcus maripaludis (strain DSM 14266 / JCM 13030 / NBRC 101832 / S2 / LL).